The primary structure comprises 541 residues: Atlastin (541 aa).

The Cytoplasmic portion of the chain corresponds to 1–424; it reads MGGSAVQVIN…NIFKAARTPA (424 aa). Residues 35–284 form the GB1/RHD3-type G domain; sequence DRFVCVVSVA…LVPMLLAPDN (250 aa). GDP is bound by residues arginine 48, lysine 49, glycine 50, lysine 51, and serine 52. The GTP site is built by arginine 48, lysine 49, glycine 50, lysine 51, serine 52, and phenylalanine 53. Position 52 (serine 52) interacts with Mg(2+). Aspartate 121 lines the Mg(2+) pocket. GDP-binding residues include arginine 192, aspartate 193, and valine 251. 3 residues coordinate GTP: arginine 192, aspartate 193, and valine 251. Residues 322–413 are 3HB (three-helix bundle) domain; that stretch reads MLVATAEANH…FTNYQAHNES (92 aa). Residues 414-422 form a linker region; that stretch reads KNIFKAART. A helical transmembrane segment spans residues 425–445; it reads VYFACAVIMYILSGIFGLVGL. The Lumenal portion of the chain corresponds to 446 to 448; sequence YTF. The chain crosses the membrane as a helical span at residues 449 to 469; the sequence is ANFCNLVMGVALLTLALWAYI. Topologically, residues 470-541 are cytoplasmic; it reads RYSGELSDFG…NASNGKVKRS (72 aa). Threonine 514 is subject to Phosphothreonine.

Belongs to the TRAFAC class dynamin-like GTPase superfamily. GB1/RHD3 GTPase family. GB1 subfamily. Monomeric and homodimeric. The homodimer, transiently formed by two molecules on opposing membranes, is the active form mediating ER membrane fusion. Interacts with spas; interaction may regulate microtubule dynamics. As to expression, ubiquitously expressed.

The protein localises to the endoplasmic reticulum membrane. It is found in the golgi apparatus membrane. It carries out the reaction GTP + H2O = GDP + phosphate + H(+). Functionally, membrane-anchored GTPase that mediates the GTP-dependent fusion of endoplasmic reticulum (ER) membranes, maintaining the continuous ER network. It facilitates the formation of three-way junctions where ER tubules intersect. Two atlastin-1 on neighboring ER tubules bind GTP and form loose homodimers through the GB1/RHD3-type G domains and 3HB regions. Upon GTP hydrolysis, the 3HB regions tighten, pulling the membranes together to drive their fusion. After fusion, the homodimer disassembles upon release of inorganic phosphate (Pi). Subsequently, GDP dissociates, resetting the monomers to a conformation ready for a new fusion cycle. May also regulate more or less directly Golgi biogenesis. May also regulate microtubule polymerization and Golgi biogenesis. Required for dopaminergic neurons survival and the growth of muscles and synapses at neuromuscular junctions. The sequence is that of Atlastin (atl) from Drosophila melanogaster (Fruit fly).